A 647-amino-acid chain; its full sequence is Phosphatidylinositol polyphosphate 5-phosphatase type IV (647 aa).

Disordered regions lie at residues 1 to 80 (MPSK…QPPI), 101 to 131 (RGSQEDLTVQNGASPCRGSLQDSVAQSPAYS), and 177 to 196 (HRDAASGGPPSRLASLHASH). Repeat 1 spans residues 52–55 (PMPP). Residues 52 to 243 (PMPPFSIPAK…AHSNLGPSRP (192 aa)) are 3 X 4 AA repeats of P-X-X-P. The segment covering 60 to 75 (AKTSNQNPQTKANLIT) has biased composition (polar residues). Repeat unit 2 spans residues 76–79 (PQPP). At Ser-103 the chain carries Phosphoserine. The span at 120–129 (LQDSVAQSPA) shows a compositional bias: polar residues. Position 197 is a phosphothreonine (Thr-197). Repeat unit 3 spans residues 240–243 (PSRP). Phosphoserine is present on residues Ser-245 and Ser-259. Cys-644 is modified (cysteine methyl ester). Cys-644 carries S-farnesyl cysteine lipidation. The propeptide at 645–647 (TVS) is removed in mature form.

Belongs to the inositol polyphosphate 5-phosphatase family. As to quaternary structure, interacts (when prenylated) with PDE6D; this is important for normal location in cilia. Highly expressed in testis, in pachytene and diplotene spermatocytes, but not in more mature elongating spermatids. Detected in neurons throughout the brain.

It is found in the cytoplasm. Its subcellular location is the cytoskeleton. It localises to the cilium axoneme. The protein localises to the golgi apparatus. The protein resides in the golgi stack membrane. It is found in the cell projection. Its subcellular location is the ruffle. It localises to the cell membrane. The protein localises to the nucleus. The enzyme catalyses a 1,2-diacyl-sn-glycero-3-phospho-(1D-myo-inositol-4,5-bisphosphate) + H2O = a 1,2-diacyl-sn-glycero-3-phospho-(1D-myo-inositol 4-phosphate) + phosphate. It carries out the reaction a 1,2-diacyl-sn-glycero-3-phospho-(1D-myo-inositol-3,4,5-trisphosphate) + H2O = a 1,2-diacyl-sn-glycero-3-phospho-(1D-myo-inositol-3,4-bisphosphate) + phosphate. It catalyses the reaction a 1,2-diacyl-sn-glycero-3-phospho-(1D-myo-inositol-3,5-bisphosphate) + H2O = a 1,2-diacyl-sn-glycero-3-phospho-(1D-myo-inositol-3-phosphate) + phosphate. Phosphatidylinositol (PtdIns) phosphatase that specifically hydrolyzes the 5-phosphate of phosphatidylinositol-3,4,5-trisphosphate (PtdIns(3,4,5)P3), phosphatidylinositol 4,5-bisphosphate (PtdIns(4,5)P2) and phosphatidylinositol 3,5-bisphosphate (PtdIns(3,5)P2). Specific for lipid substrates, inactive towards water soluble inositol phosphates. Specific for lipid substrates, inactive towards water soluble inositol phosphates. Plays an essential role in the primary cilium by controlling ciliary growth and phosphoinositide 3-kinase (PI3K) signaling and stability. In Mus musculus (Mouse), this protein is Phosphatidylinositol polyphosphate 5-phosphatase type IV (Inpp5e).